We begin with the raw amino-acid sequence, 293 residues long: 4-diphosphocytidyl-2-C-methyl-D-erythritol kinase (293 aa).

Lys16 is an active-site residue. Residue 99-109 (PMGAGLGGGSS) coordinates ATP. Residue Asp141 is part of the active site.

This sequence belongs to the GHMP kinase family. IspE subfamily.

It carries out the reaction 4-CDP-2-C-methyl-D-erythritol + ATP = 4-CDP-2-C-methyl-D-erythritol 2-phosphate + ADP + H(+). It functions in the pathway isoprenoid biosynthesis; isopentenyl diphosphate biosynthesis via DXP pathway; isopentenyl diphosphate from 1-deoxy-D-xylulose 5-phosphate: step 3/6. Catalyzes the phosphorylation of the position 2 hydroxy group of 4-diphosphocytidyl-2C-methyl-D-erythritol. The polypeptide is 4-diphosphocytidyl-2-C-methyl-D-erythritol kinase (Burkholderia mallei (strain NCTC 10247)).